The sequence spans 722 residues: G2-specific protein kinase fin1 (722 aa).

Residues 4 to 281 (YKILECIGHG…TYQLLRSPIL (278 aa)) form the Protein kinase domain. ATP is bound by residues 10 to 18 (IGHGSFGRI) and Lys-33. Asp-151 acts as the Proton acceptor in catalysis. Residues 528–557 (LSVESDETAVSASSGESVPTDSTLTDTKSK) form a disordered region. Residues 535–546 (TAVSASSGESVP) are compositionally biased toward polar residues.

Belongs to the protein kinase superfamily. Ser/Thr protein kinase family. NIMA subfamily.

The protein resides in the cytoplasm. The protein localises to the cytoskeleton. It localises to the microtubule organizing center. It is found in the spindle pole body. It carries out the reaction L-seryl-[protein] + ATP = O-phospho-L-seryl-[protein] + ADP + H(+). The catalysed reaction is L-threonyl-[protein] + ATP = O-phospho-L-threonyl-[protein] + ADP + H(+). Functionally, promotes chromosome condensation and nuclear envelope dynamics during mitosis. Activity appears at metaphase-anaphase transition. This Schizosaccharomyces pombe (strain 972 / ATCC 24843) (Fission yeast) protein is G2-specific protein kinase fin1 (fin1).